The primary structure comprises 50 residues: Major pollen allergen Ole e 6 (50 aa).

3 disulfide bridges follow: Cys8–Cys34, Cys12–Cys30, and Cys16–Cys26.

Expressed in pollen.

This Olea europaea (Common olive) protein is Major pollen allergen Ole e 6 (OLE6).